The sequence spans 77 residues: uncharacterized protein (77 aa).

This is an uncharacterized protein from Vaccinia virus (strain Western Reserve) (VACV).